We begin with the raw amino-acid sequence, 101 residues long: Urease subunit beta (101 aa).

It belongs to the urease beta subunit family. In terms of assembly, heterotrimer of UreA (gamma), UreB (beta) and UreC (alpha) subunits. Three heterotrimers associate to form the active enzyme.

The protein resides in the cytoplasm. It carries out the reaction urea + 2 H2O + H(+) = hydrogencarbonate + 2 NH4(+). It participates in nitrogen metabolism; urea degradation; CO(2) and NH(3) from urea (urease route): step 1/1. The protein is Urease subunit beta of Pseudomonas paraeruginosa (strain DSM 24068 / PA7) (Pseudomonas aeruginosa (strain PA7)).